We begin with the raw amino-acid sequence, 132 residues long: Small ribosomal subunit protein uS8 (132 aa).

The protein belongs to the universal ribosomal protein uS8 family. In terms of assembly, part of the 30S ribosomal subunit. Contacts proteins S5 and S12.

In terms of biological role, one of the primary rRNA binding proteins, it binds directly to 16S rRNA central domain where it helps coordinate assembly of the platform of the 30S subunit. This is Small ribosomal subunit protein uS8 from Caulobacter sp. (strain K31).